Reading from the N-terminus, the 792-residue chain is Homeobox protein HAZ1 (792 aa).

The segment at 1-154 (MDKTTTSDLV…RPPKGGTPKD (154 aa)) is disordered. A compositionally biased stretch (polar residues) spans 15 to 36 (NIGSNAGSAQEPLTTNGKTSGV). Basic residues predominate over residues 38 to 49 (NRYKQTVKRGRK). Polar residues predominate over residues 51 to 67 (SQISPSKTYPLRSSHSN). Positions 95–104 (VAKKRKRSKP) are enriched in basic residues. Positions 116–127 (TSEKKNKAHNEL) are enriched in basic and acidic residues. The segment at 244-301 (DIFCAACGSKDVTLKNDIILCDGICDRGFHQYCLNPPLLAEDIPQGDEGWLCPACDCK) adopts a PHD-type zinc-finger fold. Disordered regions lie at residues 338 to 495 (QIDA…NSNL) and 529 to 599 (YGKA…SDQQ). The span at 345 to 354 (PSDDSADNDY) shows a compositional bias: acidic residues. Residues 362–371 (HKVDEEKSSG) show a composition bias toward basic and acidic residues. Composition is skewed to acidic residues over residues 373-389 (DGGE…EDSE) and 433-453 (DESN…DDFC). A DNA-binding region (homeobox) is located at residues 610-669 (STAKNRHFGPAINQKLKAHFKEDPYPSRATKENLAQELGLTFNQVTKWFSSTRHYARVAA). 2 disordered regions span residues 677–697 (ENHT…QLRG) and 711–792 (SEER…KTGR). 2 stretches are compositionally biased toward polar residues: residues 716-737 (GQSN…QSVA) and 746-760 (NQGN…TPNA). Over residues 774 to 792 (DEARRKAVQRELRKMKTGR) the composition is skewed to basic and acidic residues.

The protein belongs to the PHD-associated homeobox family. Expressed in roots, leaves, stems, panicle and seeds.

It localises to the nucleus. In terms of biological role, transcriptional repressor involved in the regulation of gibberrelin (GA) signaling. Binds to the 5'-GATC-3' motif of HD16/EL1 promoter. Functions as a positive regulator of GA signaling by suppressing the expression of HD16/EL1, a negative regulator of GA signaling. The protein is Homeobox protein HAZ1 of Oryza sativa subsp. japonica (Rice).